Consider the following 513-residue polypeptide: MIFSRSMASFTLVSAYAAAGLLAIIVLNLLRQLLFRNKTDPPLVFHWIPFLGSTVTYGMDPYAFFFSCRQKYGDIFTFILLGRKITVYLGIQGNEFILNGKLKDVNAEEIYSPLTTPVFGSDIVYDCPNSKLMEQKKFIKFGLTQAALESHVPLIEKEVLDYLKTSPNFKGTSGRVEITDAMAEITIFTAGRALQGEEVRKKLTAEFADLYHDLDRGFTPINFMLPWAPLPRNRKRDAAHARMREIYMDIINERRKNPDRETSDMIWNLMHCTYKNGQPLPDKEIAHMMITLLMAGQHSSSSISSWIMLRLASEPAVMEELYQEQITKLSPDGRTLPPLQYRDLDLLPLHQNLIKETLRLHLSIHSLMRKVKNPMPVPGTPYVVPADHVLLASPGVTALSDEYFPNASRWDPHRWENRVEKEDEEDIVDYGYGTVSKGTSSPYLPFGAGRHRCIGEKFAYVNLGVIVATMARHMKLFNVDGKKGVPATDYSSMFSGPSKPAIIGWERRFPEKS.

The chain crosses the membrane as a helical span at residues 10 to 30 (FTLVSAYAAAGLLAIIVLNLL). N-linked (GlcNAc...) asparagine glycosylation is found at asparagine 37 and asparagine 406. Cysteine 453 provides a ligand contact to heme.

It belongs to the cytochrome P450 family. The cofactor is heme.

The protein localises to the endoplasmic reticulum membrane. It carries out the reaction a 14alpha-methyl steroid + 3 reduced [NADPH--hemoprotein reductase] + 3 O2 = a Delta(14) steroid + formate + 3 oxidized [NADPH--hemoprotein reductase] + 4 H2O + 4 H(+). The enzyme catalyses a 14alpha-methyl steroid + reduced [NADPH--hemoprotein reductase] + O2 = a 14alpha-hydroxymethyl steroid + oxidized [NADPH--hemoprotein reductase] + H2O + H(+). The catalysed reaction is a 14alpha-hydroxymethyl steroid + reduced [NADPH--hemoprotein reductase] + O2 = a 14alpha-formyl steroid + oxidized [NADPH--hemoprotein reductase] + 2 H2O + H(+). It catalyses the reaction a 14alpha-formyl steroid + reduced [NADPH--hemoprotein reductase] + O2 = a Delta(14) steroid + formate + oxidized [NADPH--hemoprotein reductase] + H2O + 2 H(+). It carries out the reaction lanosterol + 3 reduced [NADPH--hemoprotein reductase] + 3 O2 = 4,4-dimethyl-5alpha-cholesta-8,14,24-trien-3beta-ol + formate + 3 oxidized [NADPH--hemoprotein reductase] + 4 H2O + 4 H(+). The enzyme catalyses lanosterol + reduced [NADPH--hemoprotein reductase] + O2 = 32-hydroxylanosterol + oxidized [NADPH--hemoprotein reductase] + H2O + H(+). The catalysed reaction is 32-hydroxylanosterol + reduced [NADPH--hemoprotein reductase] + O2 = 32-oxolanosterol + oxidized [NADPH--hemoprotein reductase] + 2 H2O + H(+). It catalyses the reaction 32-oxolanosterol + reduced [NADPH--hemoprotein reductase] + O2 = 4,4-dimethyl-5alpha-cholesta-8,14,24-trien-3beta-ol + formate + oxidized [NADPH--hemoprotein reductase] + H2O + 2 H(+). It carries out the reaction eburicol + 3 reduced [NADPH--hemoprotein reductase] + 3 O2 = 14-demethyleburicol + formate + 3 oxidized [NADPH--hemoprotein reductase] + 4 H2O + 4 H(+). The enzyme catalyses eburicol + reduced [NADPH--hemoprotein reductase] + O2 = 32-hydroxyeburicol + oxidized [NADPH--hemoprotein reductase] + H2O + H(+). The catalysed reaction is 32-hydroxyeburicol + reduced [NADPH--hemoprotein reductase] + O2 = 32-oxoeburicol + oxidized [NADPH--hemoprotein reductase] + 2 H2O + H(+). It catalyses the reaction 32-oxoeburicol + reduced [NADPH--hemoprotein reductase] + O2 = 14-demethyleburicol + formate + oxidized [NADPH--hemoprotein reductase] + H2O + 2 H(+). The protein operates within steroid biosynthesis; sterol biosynthesis. Functionally, sterol 14alpha-demethylase, encoded by cyp51A, cyp51B and cyp51C, that plays a critical role in the third module of ergosterol biosynthesis pathway, being ergosterol the major sterol component in fungal membranes that participates in a variety of functions. The third module or late pathway involves the ergosterol synthesis itself through consecutive reactions that mainly occur in the endoplasmic reticulum (ER) membrane. In filamentous fungi, during the initial step of this module, lanosterol (lanosta-8,24-dien-3beta-ol) can be metabolized to eburicol. Sterol 14alpha-demethylase catalyzes the three-step oxidative removal of the 14alpha-methyl group (C-32) of both these sterols in the form of formate, and converts eburicol and lanosterol to 14-demethyleburicol (4,4,24-trimethylergosta-8,14,24(28)-trienol) and 4,4-dimethyl-5alpha-cholesta-8,14,24-trien-3beta-ol, respectively, which are further metabolized by other enzymes in the pathway to ergosterol. Can also use substrates not intrinsic to fungi, such as 24,25-dihydrolanosterol (DHL), producing 4,4'-dimethyl-8,14-cholestadien-3-beta-ol, but at lower rates than the endogenous substrates. Its function is as follows. As a target of azole drugs, plays a crucial role in azole susceptibility. This Aspergillus flavus (strain ATCC 200026 / FGSC A1120 / IAM 13836 / NRRL 3357 / JCM 12722 / SRRC 167) protein is Sterol 14-alpha demethylase.